Consider the following 315-residue polypeptide: Taste receptor type 2 member 129 (315 aa).

Residues 1–9 are Extracellular-facing; sequence MDGIIQIIS. A helical membrane pass occupies residues 10-30; the sequence is AFIVIIEIIIGWFGNGFIVLV. Topologically, residues 31–46 are cytoplasmic; that stretch reads NCMHWIKRRRISTVNQ. The chain crosses the membrane as a helical span at residues 47–67; that stretch reads ILTALAFSRIYLLLTVFTVIL. At 68–101 the chain is on the extracellular side; the sequence is ASVQYSNILVTRREVKVIIFHLITSNHFSMWLAA. A helical membrane pass occupies residues 102 to 122; that stretch reads CLGLFYFLKIANFSNFIFVFL. Topologically, residues 123–128 are cytoplasmic; that stretch reads KKRVNK. A helical transmembrane segment spans residues 129–149; sequence VVSGTLLMSLVFLFLNTLLIN. At 150-185 the chain is on the extracellular side; that stretch reads SYIDAQIDDYRGYLLYDFTSNITVSFYRVILVINNC. Asn-170 is a glycosylation site (N-linked (GlcNAc...) asparagine). Residues 186–206 traverse the membrane as a helical segment; it reads IFTSIPFALSQSTFLMLIFSL. Topologically, residues 207 to 233 are cytoplasmic; sequence WRHYKKMQQHAQRCRDTLTNAHIKVLQ. A helical transmembrane segment spans residues 234–254; that stretch reads TMIMYVLLSAIFFLFLSMQIW. The Extracellular portion of the chain corresponds to 255 to 266; the sequence is RNKLMENILFIR. The chain crosses the membrane as a helical span at residues 267–287; that stretch reads FCETVAAVFPSGHSCVLIWGD. The Cytoplasmic portion of the chain corresponds to 288-315; it reads TNLRQTFLSVLWWLKHRFTLWVPKLYCR.

It belongs to the G-protein coupled receptor T2R family.

The protein localises to the membrane. In terms of biological role, putative taste receptor which may play a role in the perception of bitterness. This chain is Taste receptor type 2 member 129, found in Rattus norvegicus (Rat).